A 2313-amino-acid chain; its full sequence is Voltage-dependent R-type calcium channel subunit alpha-1E (2313 aa).

Positions 1–38 are disordered; that stretch reads MARFGEAVVARPGSGDGDSDQSRNRQGTPVPASGQAAA. Residues 1–89 are Cytoplasmic-facing; sequence MARFGEAVVA…KYAKKLIDWP (89 aa). Serine 14 and serine 19 each carry phosphoserine. The I repeat unit spans residues 76-354; it reads NIVRKYAKKL…LVLGVLSGEF (279 aa). A helical transmembrane segment spans residues 90–108; it reads PFEYMILATIIANCIVLAL. The Extracellular portion of the chain corresponds to 109–127; that stretch reads EQHLPEDDKTPMSRRLEKT. A helical membrane pass occupies residues 128–146; sequence EPYFIGIFCFEAGIKIVAL. The Cytoplasmic segment spans residues 147–158; sequence GFIFHKGSYLRN. The helical transmembrane segment at 159-173 threads the bilayer; it reads GWNVMDFIVVLSGIL. Residues 174–185 lie on the Extracellular side of the membrane; it reads ATAGTHFNTHVD. The chain crosses the membrane as a helical span at residues 186–205; sequence LRTLRAVRVLRPLKLVSGIP. Residues 206 to 223 are Cytoplasmic-facing; it reads SLQIVLKSIMKAMVPLLQ. The helical transmembrane segment at 224–244 threads the bilayer; that stretch reads IGLLLFFAILMFAIIGLEFYS. The Extracellular segment spans residues 245 to 326; that stretch reads GKLHRACFMN…NTNDALGATW (82 aa). N-linked (GlcNAc...) asparagine glycosylation occurs at asparagine 254. A helical transmembrane segment spans residues 327 to 350; it reads NWLYFIPLIIIGSFFVLNLVLGVL. Residues 351 to 476 are Cytoplasmic-facing; the sequence is SGEFAKERER…ISIRHMVKSQ (126 aa). The segment at 374–391 is binding to the beta subunit; sequence QQIERELNGYRAWIDKAE. Aspartate 426 serves as a coordination point for Ca(2+). Serine 427 is subject to Phosphoserine. Ca(2+) contacts are provided by serine 428, glutamate 430, and cysteine 432. Position 440 is a phosphothreonine (threonine 440). The II repeat unit spans residues 462 to 706; that stretch reads ERLLRISIRH…VFLAIAVDNL (245 aa). A helical transmembrane segment spans residues 477 to 496; that stretch reads VFYWIVLSLVALNTACVAIV. The Extracellular portion of the chain corresponds to 497–509; it reads HHNQPQWLTHLLY. Residues 510 to 529 form a helical membrane-spanning segment; it reads YAEFLFLGLFLLEMSLKMYG. Residues 530–538 lie on the Cytoplasmic side of the membrane; that stretch reads MGPRLYFHS. The chain crosses the membrane as a helical span at residues 539-557; it reads SFNCFDFGVTVGSIFEVVW. Residues 558 to 567 are Extracellular-facing; that stretch reads AIFRPGTSFG. The helical transmembrane segment at 568–586 threads the bilayer; the sequence is ISVLRALRLLRIFKITKYW. Residues 587 to 605 lie on the Cytoplasmic side of the membrane; that stretch reads ASLRNLVVSLMSSMKSIIS. A helical membrane pass occupies residues 606–625; that stretch reads LLFLLFLFIVVFALLGMQLF. Residues 626–678 are Extracellular-facing; that stretch reads GGRFNFNDGTPSANFDTFPAAIMTVFQILTGEDWNEVMYNGIRSQGGVSSGMW. A helical transmembrane segment spans residues 679 to 703; sequence SAIYFIVLTLFGNYTLLNVFLAIAV. Topologically, residues 704-1148 are cytoplasmic; that stretch reads DNLANAQELT…TNPIRRACHY (445 aa). A disordered region spans residues 729–774; sequence LQKAKEVSPMSAPNMPSIERDRRRRHHMSMWEPRSSHLRERRRRHH. Phosphoserine occurs at positions 736, 745, 793, 815, and 855. A disordered region spans residues 851 to 984; the sequence is SRGGSLKGDG…EERAQDLRRT (134 aa). Positions 866 to 875 are enriched in polar residues; sequence ALDNQRTPLS. The span at 913 to 926 shows a compositional bias: basic residues; sequence RHRQSQRRSRHRRV. The span at 933–945 shows a compositional bias: low complexity; the sequence is SSSASRSRSASQE. Residue serine 947 is modified to Phosphoserine. Positions 955 to 983 are enriched in basic and acidic residues; the sequence is EGEKDHELRGNHGAKEPTIQEERAQDLRR. Phosphoserine is present on serine 1097. Residues 1103–1125 are disordered; sequence EIREDEEEVEKKKQKKEKRETGK. One copy of the III repeat lies at 1140 to 1426; it reads NPIRRACHYI…IFVALIIITF (287 aa). A helical transmembrane segment spans residues 1149–1165; sequence IVNLRYFEMCILLVIAA. The Extracellular segment spans residues 1166–1189; the sequence is SSIALAAEDPVLTNSERNKVLRYF. A helical transmembrane segment spans residues 1190–1209; that stretch reads DYVFTGVFTFEMVIKMIDQG. The Cytoplasmic segment spans residues 1210–1217; sequence LILQDGSY. A helical transmembrane segment spans residues 1218 to 1240; the sequence is FRDLWNILDFVVVVGALVAFALA. The Extracellular portion of the chain corresponds to 1241–1254; the sequence is NALGTNKGRDIKTI. Residues 1255–1272 form a helical membrane-spanning segment; that stretch reads KSLRVLRVLRPLKTIKRL. Over 1273–1291 the chain is Cytoplasmic; the sequence is PKLKAVFDCVVTSLKNVFN. A helical membrane pass occupies residues 1292–1311; it reads ILIVYKLFMFIFAVIAVQLF. The Extracellular portion of the chain corresponds to 1312–1398; the sequence is KGKFFYCTDS…RGPSRSNRME (87 aa). A helical transmembrane segment spans residues 1399-1422; sequence MSIFYVVYFVVFPFFFVNIFVALI. The Cytoplasmic segment spans residues 1423 to 1479; sequence IITFQEQGDKMMEECSLEKNERACIDFAISAKPLTRYMPQNRHTFQYRVWHFVVSPS. The stretch at 1463 to 1726 is one IV repeat; sequence NRHTFQYRVW…LFVAVIMDNF (264 aa). Residues 1480–1498 form a helical membrane-spanning segment; the sequence is FEYTIMAMIALNTVVLMMK. At 1499–1513 the chain is on the extracellular side; the sequence is YYSAPCTYELALKYL. A helical transmembrane segment spans residues 1514-1533; sequence NIAFTMVFSLECVLKVIAFG. Residues 1534–1541 lie on the Cytoplasmic side of the membrane; that stretch reads FLNYFRDT. Residues 1542 to 1560 form a helical membrane-spanning segment; sequence WNIFDFITVIGSITEIILT. Over 1561–1571 the chain is Extracellular; sequence DSKLVNTSGFN. N-linked (GlcNAc...) asparagine glycosylation is found at asparagine 1566 and asparagine 1571. Residues 1572–1590 traverse the membrane as a helical segment; sequence MSFLKLFRAARLIKLLRQG. Over 1591 to 1609 the chain is Cytoplasmic; sequence YTIRILLWTFVQSFKALPY. The chain crosses the membrane as a helical span at residues 1610 to 1629; the sequence is VCLLIAMLFFIYAIIGMQVF. Over 1630–1698 the chain is Extracellular; sequence GNIKLDEESH…NENERCGTDL (69 aa). A helical membrane pass occupies residues 1699-1724; the sequence is AYVYFVSFIFFCSFLMLNLFVAVIMD. Over 1725 to 2313 the chain is Cytoplasmic; the sequence is NFEYLTRDSS…LSDTEEDDKC (589 aa). Residues 1739 to 1774 enclose the EF-hand domain; that stretch reads HHLDEFVRVWAEYDRAACGRIHYTEMYEMLTLMSPP. Residues aspartate 1752, arginine 1758, and glutamate 1763 each coordinate Ca(2+). 3 disordered regions span residues 1970–2170, 2206–2225, and 2263–2295; these read VSEL…RPLL, CLTE…ASPQ, and SNTI…GPGM. Over residues 2012–2023 the composition is skewed to polar residues; sequence TDPSSMRRSFST. Over residues 2055–2064 the composition is skewed to low complexity; that stretch reads HSSLRLSAHR. The span at 2065–2085 shows a compositional bias: basic and acidic residues; sequence LNSDSGHKSDTHRSGGRERGR. Phosphoserine occurs at positions 2094 and 2113. A compositionally biased stretch (basic and acidic residues) spans 2101–2118; that stretch reads NSEERGTQADWESPERRQ. The segment covering 2129 to 2152 has biased composition (polar residues); the sequence is TPNRQGTGSLSESSIPSVSDTSTP. A compositionally biased stretch (low complexity) spans 2210 to 2225; that stretch reads SSNSPHPQQSQHASPQ.

The protein belongs to the calcium channel alpha-1 subunit (TC 1.A.1.11) family. CACNA1E subfamily. In terms of assembly, interacts with EFHC1. Voltage-dependent calcium channels are multisubunit complexes, consisting of alpha-1, alpha-2, beta and delta subunits in a 1:1:1:1 ratio. The channel activity is directed by the pore-forming and voltage-sensitive alpha-1 subunit. In many cases, this subunit is sufficient to generate voltage-sensitive calcium channel activity. The auxiliary subunits beta and alpha-2/delta linked by a disulfide bridge regulate the channel activity. In terms of tissue distribution, expressed in neuronal tissues and in kidney.

It localises to the membrane. It carries out the reaction Ca(2+)(in) = Ca(2+)(out). In terms of biological role, voltage-sensitive calcium channels (VSCC) mediate the entry of calcium ions into excitable cells. They are also involved in a variety of calcium-dependent processes, including muscle contraction, hormone or neurotransmitter release, gene expression, cell motility, cell division and cell death. The isoform alpha-1E gives rise to R-type calcium currents. R-type calcium channels belong to the 'high-voltage activated' (HVA) group and are blocked by nickel. They are however insensitive to dihydropyridines (DHP). Calcium channels containing alpha-1E subunit could be involved in the modulation of firing patterns of neurons which is important for information processing. Voltage-sensitive calcium channels (VSCC) mediate the entry of calcium ions into excitable cells. They are also involved in a variety of calcium-dependent processes, including muscle contraction, hormone or neurotransmitter release, gene expression, cell motility, cell division and cell death. The isoform alpha-1E gives rise to R-type calcium currents. In Homo sapiens (Human), this protein is Voltage-dependent R-type calcium channel subunit alpha-1E (CACNA1E).